A 118-amino-acid polypeptide reads, in one-letter code: Aspartate 1-decarboxylase (118 aa).

The Schiff-base intermediate with substrate; via pyruvic acid role is filled by Ser-25. Ser-25 is subject to Pyruvic acid (Ser). Thr-57 serves as a coordination point for substrate. The active-site Proton donor is Tyr-58. Position 73–75 (Gly-73–Ala-75) interacts with substrate.

It belongs to the PanD family. As to quaternary structure, heterooctamer of four alpha and four beta subunits. Pyruvate serves as cofactor. In terms of processing, is synthesized initially as an inactive proenzyme, which is activated by self-cleavage at a specific serine bond to produce a beta-subunit with a hydroxyl group at its C-terminus and an alpha-subunit with a pyruvoyl group at its N-terminus.

It localises to the cytoplasm. It carries out the reaction L-aspartate + H(+) = beta-alanine + CO2. Its pathway is cofactor biosynthesis; (R)-pantothenate biosynthesis; beta-alanine from L-aspartate: step 1/1. Catalyzes the pyruvoyl-dependent decarboxylation of aspartate to produce beta-alanine. The protein is Aspartate 1-decarboxylase of Phenylobacterium zucineum (strain HLK1).